The primary structure comprises 734 residues: Elongation factor G, mitochondrial (734 aa).

A mitochondrion-targeting transit peptide spans 1–32; the sequence is MTSFLTSRFGGLALRNVMNNKNGINSFGLRCF. One can recognise a tr-type G domain in the interval 38–318; the sequence is SGLRNIGISA…GVIKYLPSPN (281 aa). Residues 47–54, 114–118, and 168–171 contribute to the GTP site; these read AHIDSGKT, DTPGH, and NKLD.

The protein belongs to the TRAFAC class translation factor GTPase superfamily. Classic translation factor GTPase family. EF-G/EF-2 subfamily.

It is found in the mitochondrion. The catalysed reaction is GTP + H2O = GDP + phosphate + H(+). The protein operates within protein biosynthesis; polypeptide chain elongation. Its function is as follows. Mitochondrial GTPase that catalyzes the GTP-dependent ribosomal translocation step during translation elongation. During this step, the ribosome changes from the pre-translocational (PRE) to the post-translocational (POST) state as the newly formed A-site-bound peptidyl-tRNA and P-site-bound deacylated tRNA move to the P and E sites, respectively. Catalyzes the coordinated movement of the two tRNA molecules, the mRNA and conformational changes in the ribosome. This Dictyostelium discoideum (Social amoeba) protein is Elongation factor G, mitochondrial (gfm1).